A 104-amino-acid chain; its full sequence is Small ribosomal subunit protein uS10 (104 aa).

The protein belongs to the universal ribosomal protein uS10 family. As to quaternary structure, part of the 30S ribosomal subunit.

Functionally, involved in the binding of tRNA to the ribosomes. The polypeptide is Small ribosomal subunit protein uS10 (Thermosynechococcus vestitus (strain NIES-2133 / IAM M-273 / BP-1)).